Consider the following 294-residue polypeptide: Foldase protein PrsA 1 (294 aa).

An N-terminal signal peptide occupies residues 1 to 21; it reads MTKLKKVMISVIAATLLLLAG. Cysteine 22 carries N-palmitoyl cysteine lipidation. The S-diacylglycerol cysteine moiety is linked to residue cysteine 22. The region spanning 135-226 is the PpiC domain; sequence EPDITVRHIL…YGYHLIQLVK (92 aa).

Belongs to the PrsA family.

The protein localises to the cell membrane. The enzyme catalyses [protein]-peptidylproline (omega=180) = [protein]-peptidylproline (omega=0). Functionally, plays a major role in protein secretion by helping the post-translocational extracellular folding of several secreted proteins. In Listeria monocytogenes serovar 1/2a (strain ATCC BAA-679 / EGD-e), this protein is Foldase protein PrsA 1 (prsA1).